We begin with the raw amino-acid sequence, 436 residues long: 3-ketoacyl-CoA thiolase (436 aa).

Cysteine 99 (acyl-thioester intermediate) is an active-site residue. Active-site proton acceptor residues include histidine 392 and cysteine 422.

This sequence belongs to the thiolase-like superfamily. Thiolase family. As to quaternary structure, heterotetramer of two alpha chains (FadJ) and two beta chains (FadI).

It localises to the cytoplasm. The enzyme catalyses an acyl-CoA + acetyl-CoA = a 3-oxoacyl-CoA + CoA. It participates in lipid metabolism; fatty acid beta-oxidation. Its function is as follows. Catalyzes the final step of fatty acid oxidation in which acetyl-CoA is released and the CoA ester of a fatty acid two carbons shorter is formed. The chain is 3-ketoacyl-CoA thiolase from Salmonella paratyphi B (strain ATCC BAA-1250 / SPB7).